The chain runs to 271 residues: Phosphonoacetaldehyde hydrolase (271 aa).

Residue aspartate 12 is the Nucleophile of the active site. The Mg(2+) site is built by aspartate 12 and alanine 14. Lysine 54 functions as the Schiff-base intermediate with substrate in the catalytic mechanism. Aspartate 188 is a Mg(2+) binding site.

This sequence belongs to the HAD-like hydrolase superfamily. PhnX family. As to quaternary structure, homodimer. Mg(2+) is required as a cofactor.

It catalyses the reaction phosphonoacetaldehyde + H2O = acetaldehyde + phosphate + H(+). Its function is as follows. Involved in phosphonate degradation. This Vibrio campbellii (strain ATCC BAA-1116) protein is Phosphonoacetaldehyde hydrolase.